The following is a 770-amino-acid chain: Transferrin receptor protein 1 (770 aa).

The Cytoplasmic portion of the chain corresponds to 1–70 (MMDQARSAFS…KPKRCNGFIC (70 aa)). Residues 1–70 (MMDQARSAFS…KPKRCNGFIC (70 aa)) are mediates interaction with SH3BP4. Ser-10 and Ser-19 each carry phosphoserine. Tyr-20 carries the phosphotyrosine modification. The short motif at 20–23 (YTRF) is the Endocytosis signal element. The residue at position 21 (Thr-21) is a Phosphothreonine. Ser-24 carries the phosphoserine modification. The Stop-transfer sequence motif lies at 61–64 (KPKR). S-palmitoyl cysteine attachment occurs at residues Cys-65 and Cys-70. A helical; Signal-anchor for type II membrane protein transmembrane segment spans residues 71–90 (YGTIAVVLFFLIGFMIGYLG). Residues 91 to 770 (YCKRVEPKAG…GDIWDIDNEF (680 aa)) are Extracellular-facing. The segment at 102-122 (ERPTGTEALGTERTEPSETEE) is disordered. The O-linked (GalNAc...) threonine glycan is linked to Thr-107. The PA domain maps to 233-323 (SKATTVTGRL…GTGDPYTPGF (91 aa)). 3 N-linked (GlcNAc...) asparagine glycosylation sites follow: Asn-261, Asn-327, and Asn-384. Residues 579 to 770 (TMDLYENLNQ…GDIWDIDNEF (192 aa)) are ligand-binding. A Cell attachment site motif is present at residues 656 to 658 (RGD). N-linked (GlcNAc...) asparagine glycans are attached at residues Asn-732 and Asn-737.

The protein belongs to the peptidase M28 family. M28B subfamily. As to quaternary structure, homodimer; disulfide-linked. Binds one transferrin molecule per subunit. Interacts with SH3BP4. Interacts with STEAP3; facilitates TFRC endocytosis in erythroid precursor cells. Post-translationally, stearoylated by ZDHHC6 which inhibits TFRC-mediated activation of the JNK pathway and promotes mitochondrial fragmentation. Stearoylation does not affect iron uptake. In terms of processing, N- and O-glycosylated, phosphorylated and palmitoylated.

The protein resides in the cell membrane. It localises to the melanosome. Cellular uptake of iron occurs via receptor-mediated endocytosis of ligand-occupied transferrin receptor into specialized endosomes. Endosomal acidification leads to iron release. The apotransferrin-receptor complex is then recycled to the cell surface with a return to neutral pH and the concomitant loss of affinity of apotransferrin for its receptor. Transferrin receptor is necessary for development of erythrocytes and the nervous system. Positively regulates T and B cell proliferation through iron uptake. Acts as a lipid sensor that regulates mitochondrial fusion by regulating activation of the JNK pathway. When dietary levels of stearate (C18:0) are low, promotes activation of the JNK pathway, resulting in HUWE1-mediated ubiquitination and subsequent degradation of the mitofusin MFN2 and inhibition of mitochondrial fusion. When dietary levels of stearate (C18:0) are high, TFRC stearoylation inhibits activation of the JNK pathway and thus degradation of the mitofusin MFN2. Mediates uptake of NICOL1 into fibroblasts where it may regulate extracellular matrix production. This is Transferrin receptor protein 1 (TFRC) from Canis lupus familiaris (Dog).